Reading from the N-terminus, the 51-residue chain is UPF0337 protein NE0131 (51 aa).

This sequence belongs to the UPF0337 (CsbD) family.

The sequence is that of UPF0337 protein NE0131 from Nitrosomonas europaea (strain ATCC 19718 / CIP 103999 / KCTC 2705 / NBRC 14298).